The chain runs to 263 residues: 3'-5' ssDNA/RNA exonuclease TatD (263 aa).

Positions 92, 128, and 153 each coordinate a divalent metal cation.

This sequence belongs to the metallo-dependent hydrolases superfamily. TatD-type hydrolase family. TatD subfamily. In terms of assembly, monomer. Mg(2+) serves as cofactor.

Its subcellular location is the cytoplasm. 3'-5' exonuclease that prefers single-stranded DNA and RNA. May play a role in the H(2)O(2)-induced DNA damage repair. In Rahnella sp. (strain Y9602), this protein is 3'-5' ssDNA/RNA exonuclease TatD.